The chain runs to 947 residues: Testis-expressed protein 11 (947 aa).

This sequence belongs to the SPO22 family. In terms of assembly, interacts with SYCP2. Interacts with PBXIP1; may prevent interaction between PBXIP1 and ESR2. Interacts with SHOC1. Interacts with REDIC1. As to expression, testis-specific.

It localises to the chromosome. Functionally, regulator of crossing-over during meiosis. Involved in initiation and/or maintenance of chromosome synapsis and formation of crossovers. In Mus musculus (Mouse), this protein is Testis-expressed protein 11 (Tex11).